Reading from the N-terminus, the 336-residue chain is Biotin synthase (336 aa).

The Radical SAM core domain occupies 55 to 288; sequence GEAASLHACS…RTIIKFAAGR (234 aa). 3 residues coordinate [4Fe-4S] cluster: Cys73, Cys77, and Cys80. The [2Fe-2S] cluster site is built by Cys152, Cys213, and Lys283.

The protein belongs to the radical SAM superfamily. Biotin synthase family. In terms of assembly, homodimer. [4Fe-4S] cluster serves as cofactor. [2Fe-2S] cluster is required as a cofactor.

The catalysed reaction is (4R,5S)-dethiobiotin + (sulfur carrier)-SH + 2 reduced [2Fe-2S]-[ferredoxin] + 2 S-adenosyl-L-methionine = (sulfur carrier)-H + biotin + 2 5'-deoxyadenosine + 2 L-methionine + 2 oxidized [2Fe-2S]-[ferredoxin]. The protein operates within cofactor biosynthesis; biotin biosynthesis; biotin from 7,8-diaminononanoate: step 2/2. Functionally, catalyzes the conversion of dethiobiotin (DTB) to biotin by the insertion of a sulfur atom into dethiobiotin via a radical-based mechanism. The sequence is that of Biotin synthase from Chlorobium limicola (strain DSM 245 / NBRC 103803 / 6330).